Here is a 965-residue protein sequence, read N- to C-terminus: Isoleucine--tRNA ligase (965 aa).

The 'HIGH' region motif lies at 68 to 78 (PYANGSLHMGH). E582 provides a ligand contact to L-isoleucyl-5'-AMP. The 'KMSKS' region signature appears at 623-627 (KMSKS). K626 is a binding site for ATP. Zn(2+) contacts are provided by C936, C939, C956, and C959.

This sequence belongs to the class-I aminoacyl-tRNA synthetase family. IleS type 1 subfamily. As to quaternary structure, monomer. The cofactor is Zn(2+).

It localises to the cytoplasm. It catalyses the reaction tRNA(Ile) + L-isoleucine + ATP = L-isoleucyl-tRNA(Ile) + AMP + diphosphate. In terms of biological role, catalyzes the attachment of isoleucine to tRNA(Ile). As IleRS can inadvertently accommodate and process structurally similar amino acids such as valine, to avoid such errors it has two additional distinct tRNA(Ile)-dependent editing activities. One activity is designated as 'pretransfer' editing and involves the hydrolysis of activated Val-AMP. The other activity is designated 'posttransfer' editing and involves deacylation of mischarged Val-tRNA(Ile). The polypeptide is Isoleucine--tRNA ligase (Prochlorococcus marinus (strain MIT 9515)).